The following is a 522-amino-acid chain: Glutamate--cysteine ligase (522 aa).

The protein belongs to the glutamate--cysteine ligase type 1 family. Type 1 subfamily.

It carries out the reaction L-cysteine + L-glutamate + ATP = gamma-L-glutamyl-L-cysteine + ADP + phosphate + H(+). It participates in sulfur metabolism; glutathione biosynthesis; glutathione from L-cysteine and L-glutamate: step 1/2. This chain is Glutamate--cysteine ligase, found in Shewanella halifaxensis (strain HAW-EB4).